A 187-amino-acid chain; its full sequence is Ion-translocating oxidoreductase complex subunit B (187 aa).

Positions 1–26 (MTHILFAVLVLALLALAFGIILGFAA) are hydrophobic. The region spanning 32–90 (EADPIVDQLDALLPQTQCGQCGYPGCKPYAEALANGDQINKCVPGGDATMRKIADLMGV) is the 4Fe-4S domain. Residues C49, C52, C57, C73, C115, C118, C121, C125, C145, C148, C151, and C155 each coordinate [4Fe-4S] cluster. 2 4Fe-4S ferredoxin-type domains span residues 106 to 135 (KVAF…GATK) and 136 to 165 (AMHT…MIPV).

This sequence belongs to the 4Fe4S bacterial-type ferredoxin family. RnfB subfamily. The complex is composed of six subunits: RnfA, RnfB, RnfC, RnfD, RnfE and RnfG. Requires [4Fe-4S] cluster as cofactor.

The protein resides in the cell inner membrane. Part of a membrane-bound complex that couples electron transfer with translocation of ions across the membrane. This Aeromonas hydrophila subsp. hydrophila (strain ATCC 7966 / DSM 30187 / BCRC 13018 / CCUG 14551 / JCM 1027 / KCTC 2358 / NCIMB 9240 / NCTC 8049) protein is Ion-translocating oxidoreductase complex subunit B.